Consider the following 424-residue polypeptide: Serine--tRNA ligase (424 aa).

Residue 231 to 233 coordinates L-serine; the sequence is TAE. Residue 262–264 participates in ATP binding; the sequence is RSE. Glutamate 285 lines the L-serine pocket. Residue 349–352 coordinates ATP; sequence EISS. Position 385 (serine 385) interacts with L-serine.

The protein belongs to the class-II aminoacyl-tRNA synthetase family. Type-1 seryl-tRNA synthetase subfamily. Homodimer. The tRNA molecule binds across the dimer.

It localises to the cytoplasm. It carries out the reaction tRNA(Ser) + L-serine + ATP = L-seryl-tRNA(Ser) + AMP + diphosphate + H(+). It catalyses the reaction tRNA(Sec) + L-serine + ATP = L-seryl-tRNA(Sec) + AMP + diphosphate + H(+). Its pathway is aminoacyl-tRNA biosynthesis; selenocysteinyl-tRNA(Sec) biosynthesis; L-seryl-tRNA(Sec) from L-serine and tRNA(Sec): step 1/1. Catalyzes the attachment of serine to tRNA(Ser). Is also able to aminoacylate tRNA(Sec) with serine, to form the misacylated tRNA L-seryl-tRNA(Sec), which will be further converted into selenocysteinyl-tRNA(Sec). The sequence is that of Serine--tRNA ligase from Bacillus cereus (strain AH187).